We begin with the raw amino-acid sequence, 82 residues long: uncharacterized protein (82 aa).

This sequence belongs to the chlamydial CPn_0710/CT_666/TC_0037 family.

This is an uncharacterized protein from Chlamydia muridarum (strain MoPn / Nigg).